We begin with the raw amino-acid sequence, 248 residues long: Pyridoxine 5'-phosphate synthase (248 aa).

Residue Asn-12 coordinates 3-amino-2-oxopropyl phosphate. Residue 14–15 (DH) participates in 1-deoxy-D-xylulose 5-phosphate binding. Position 23 (Arg-23) interacts with 3-amino-2-oxopropyl phosphate. His-48 functions as the Proton acceptor in the catalytic mechanism. Residues Arg-50 and His-55 each coordinate 1-deoxy-D-xylulose 5-phosphate. Catalysis depends on Glu-75, which acts as the Proton acceptor. Position 105 (Thr-105) interacts with 1-deoxy-D-xylulose 5-phosphate. His-196 (proton donor) is an active-site residue. 3-amino-2-oxopropyl phosphate contacts are provided by residues Gly-197 and 218–219 (GH).

This sequence belongs to the PNP synthase family. As to quaternary structure, homooctamer; tetramer of dimers.

It localises to the cytoplasm. It catalyses the reaction 3-amino-2-oxopropyl phosphate + 1-deoxy-D-xylulose 5-phosphate = pyridoxine 5'-phosphate + phosphate + 2 H2O + H(+). It functions in the pathway cofactor biosynthesis; pyridoxine 5'-phosphate biosynthesis; pyridoxine 5'-phosphate from D-erythrose 4-phosphate: step 5/5. In terms of biological role, catalyzes the complicated ring closure reaction between the two acyclic compounds 1-deoxy-D-xylulose-5-phosphate (DXP) and 3-amino-2-oxopropyl phosphate (1-amino-acetone-3-phosphate or AAP) to form pyridoxine 5'-phosphate (PNP) and inorganic phosphate. The chain is Pyridoxine 5'-phosphate synthase from Ectopseudomonas mendocina (strain ymp) (Pseudomonas mendocina).